A 230-amino-acid polypeptide reads, in one-letter code: Orotidine 5'-phosphate decarboxylase (230 aa).

Substrate-binding positions include aspartate 12, lysine 34, 61–70 (DMKLLDIDNT), threonine 116, arginine 177, glutamine 186, and arginine 207. Lysine 63 (proton donor) is an active-site residue.

Belongs to the OMP decarboxylase family. Type 1 subfamily. Homodimer.

It catalyses the reaction orotidine 5'-phosphate + H(+) = UMP + CO2. The protein operates within pyrimidine metabolism; UMP biosynthesis via de novo pathway; UMP from orotate: step 2/2. In terms of biological role, catalyzes the decarboxylation of orotidine 5'-monophosphate (OMP) to uridine 5'-monophosphate (UMP). The protein is Orotidine 5'-phosphate decarboxylase of Rhizobium rhizogenes (strain K84 / ATCC BAA-868) (Agrobacterium radiobacter).